The sequence spans 141 residues: Hemoglobin subunit alpha (141 aa).

The 141-residue stretch at 1-141 folds into the Globin domain; it reads VLSPADKTNI…VSTVLTSKYR (141 aa). Serine 3 carries the post-translational modification Phosphoserine. Lysine 7 carries the N6-succinyllysine modification. Threonine 8 carries the phosphothreonine modification. An N6-succinyllysine modification is found at lysine 11. Lysine 16 carries the post-translational modification N6-acetyllysine; alternate. Residue lysine 16 is modified to N6-succinyllysine; alternate. At tyrosine 24 the chain carries Phosphotyrosine. At serine 35 the chain carries Phosphoserine. Lysine 40 carries the post-translational modification N6-succinyllysine. Serine 49 carries the post-translational modification Phosphoserine. Histidine 58 is a binding site for O2. Histidine 87 is a binding site for heme b. Serine 102 is subject to Phosphoserine. Position 108 is a phosphothreonine (threonine 108). Serine 124 carries the post-translational modification Phosphoserine. A phosphothreonine mark is found at threonine 134 and threonine 137. Position 138 is a phosphoserine (serine 138).

Belongs to the globin family. In terms of assembly, heterotetramer of two alpha chains and two beta chains. As to expression, red blood cells.

Functionally, involved in oxygen transport from the lung to the various peripheral tissues. Hemopressin acts as an antagonist peptide of the cannabinoid receptor CNR1. Hemopressin-binding efficiently blocks cannabinoid receptor CNR1 and subsequent signaling. This Chrysocyon brachyurus (Maned wolf) protein is Hemoglobin subunit alpha (HBA).